The following is a 99-amino-acid chain: Small integral membrane protein 9 (99 aa).

The first 26 residues, 1–26 (MEPQKLLIIGFLLCSLTCLLLETVAS), serve as a signal peptide directing secretion. Residues 27–73 (SPLPLSALGIQEKTGSKPRSGGNHRSWLNNFRDYLWQLIKSALPPAA) lie on the Extracellular side of the membrane. Residues 74 to 94 (IVAFLLTSALMGILCCFTILV) traverse the membrane as a helical segment. Residues 95–99 (VDPVH) are Cytoplasmic-facing.

The protein resides in the cell membrane. This chain is Small integral membrane protein 9 (SMIM9), found in Homo sapiens (Human).